We begin with the raw amino-acid sequence, 337 residues long: Arylacetonitrilase (337 aa).

Residues 7–278 (VRVAVTQHEP…EGFVYADLDL (272 aa)) form the CN hydrolase domain. Glu-47 serves as the catalytic Proton acceptor. Residue Lys-127 is part of the active site. Cys-162 acts as the Nucleophile in catalysis. The disordered stretch occupies residues 311 to 337 (QHRPEGQADNAAYGLDVPSGLVEEEGA).

The protein belongs to the carbon-nitrogen hydrolase superfamily. Nitrilase family.

It catalyses the reaction a nitrile + 2 H2O = a carboxylate + NH4(+). It carries out the reaction 4-chlorophenylacetonitrile + 2 H2O = 4-chlorophenylacetate + NH4(+). Functionally, nitrilase that hydrolyzes preferentially phenylacetonitrile, but also (R,S)-mandelonitrile, and 2-phenylpropionitrile. In Aspergillus niger (strain ATCC MYA-4892 / CBS 513.88 / FGSC A1513), this protein is Arylacetonitrilase.